A 237-amino-acid polypeptide reads, in one-letter code: Phosphoribosylaminoimidazole-succinocarboxamide synthase (237 aa).

It belongs to the SAICAR synthetase family.

It carries out the reaction 5-amino-1-(5-phospho-D-ribosyl)imidazole-4-carboxylate + L-aspartate + ATP = (2S)-2-[5-amino-1-(5-phospho-beta-D-ribosyl)imidazole-4-carboxamido]succinate + ADP + phosphate + 2 H(+). The protein operates within purine metabolism; IMP biosynthesis via de novo pathway; 5-amino-1-(5-phospho-D-ribosyl)imidazole-4-carboxamide from 5-amino-1-(5-phospho-D-ribosyl)imidazole-4-carboxylate: step 1/2. This is Phosphoribosylaminoimidazole-succinocarboxamide synthase from Idiomarina loihiensis (strain ATCC BAA-735 / DSM 15497 / L2-TR).